The following is a 245-amino-acid chain: uncharacterized protein (245 aa).

To M.tuberculosis Rv2927c.

This is an uncharacterized protein from Mycobacterium leprae (strain TN).